The primary structure comprises 193 residues: dTTP/UTP pyrophosphatase (193 aa).

D70 functions as the Proton acceptor in the catalytic mechanism.

The protein belongs to the Maf family. YhdE subfamily. A divalent metal cation serves as cofactor.

The protein localises to the cytoplasm. It carries out the reaction dTTP + H2O = dTMP + diphosphate + H(+). The enzyme catalyses UTP + H2O = UMP + diphosphate + H(+). Nucleoside triphosphate pyrophosphatase that hydrolyzes dTTP and UTP. May have a dual role in cell division arrest and in preventing the incorporation of modified nucleotides into cellular nucleic acids. In Ruminiclostridium cellulolyticum (strain ATCC 35319 / DSM 5812 / JCM 6584 / H10) (Clostridium cellulolyticum), this protein is dTTP/UTP pyrophosphatase.